A 433-amino-acid polypeptide reads, in one-letter code: MERAISTTPILDQALTCVQSYKALAATVQELASPELQRSIEEGLAQFLTHMPEFNILVNAVEPPHTSWDYLLRNDASQRGEMTMLLMELQCEIDQMAFAIRQAMQQQHPEAEPLSNNSRLVDAWTENLRSVEDHTVWRLAFWRRDHAVHTTYPTTNPLVNQSFYFAIRNELGLDVSTQFRECIRRAITQECPTITARPALHRRLVDLVVQRRRFWNFQRRIRGLSKDAVLWGRDALAPPHFAPGDERFTCPFCFFDLPVAAYRTPRAWTDHVMSDLEGYVCLYETCSSTRSWPETCPHACTSFGAWFTAMAGSFAEGVEWCSHAFACDGRRLEEVHRPRCAAPAVRLDSVCPLCGREPAVEETELRMADAADPLQDDDQNRAKARLLLSHIAGHLEVITPMAFTWNTDRNALDPDRRLFWGDIGSPGGAGGSA.

The protein operates within secondary metabolite biosynthesis. Oxidoreductase; part of the gene cluster that mediates the biosynthesis of aculins. The pathway begins with the synthesis of 6-methylsalicylic acid by the polyketide synthase (PKS) acuA via condensation of acetate and malonate units. The 6-methylsalicylic acid decarboxylase acuB then catalyzes the decarboxylation of 6-methylsalicylic acid to yield m-cresol (also known as 3-methylphenol). These first reactions occur in the cytosol. The intermediate m-cresol is then transported into the endoplasmic reticulum where the cytochrome P450 monooxygenase acuC converts it to m-hydroxybenzyl alcohol, which is further converted to gentisyl alcohol by the cytochrome P450 monooxygenase acuD. Gentisyl alcohol is further oxidized by the oxidoreductase acuE that probably catalyzes hydroxylation of the aromatic ring. The aromatic system might then be opened by oxidation through a Baeyer-Villiger type of oxidation, which could be catalyzed by acuF, with the carboxylic acid at C-1 subsequently reduced to an aldehyde by acuG. Subsequently, a hemiacetal is formed, before the dehydrogenase acuH would reduce the double bond between C-4 and C-6. Finally, keto-enol tautomerism results in formation of aculinic acid, which exists as two diastereomers (both R/S configurations at C-1) by non-enzymatic hemiacetal formation. The carboxypeptidase acuI could be involved in the linking of aculinic acid to an aculene A moiety produced by the aculene biosynthesis cluster and which leads to the production of aculin A. AcuI may also be involved in the attachment of proline to aculinic acid to form epi-aculins A and B. The chain is Oxidoreductase acuF from Aspergillus aculeatus (strain ATCC 16872 / CBS 172.66 / WB 5094).